Consider the following 364-residue polypeptide: Mitogen-activated protein kinase 11 (364 aa).

The 285-residue stretch at 24–308 folds into the Protein kinase domain; that stretch reads LQGLRPVGSG…AAEALAHAYF (285 aa). ATP is bound by residues 30–38 and Lys53; that span reads VGSGAYGSV. Glu71 is a nilotinib binding site. Catalysis depends on Asp168, which acts as the Proton acceptor. Thr180 bears the Phosphothreonine; by MAP2K3, MAP2K4 and MAP2K6 mark. The short motif at 180-182 is the TXY element; the sequence is TGY. Tyr182 carries the post-translational modification Phosphotyrosine; by MAP2K3, MAP2K4 and MAP2K6. Positions 312–331 are disordered; sequence HDPDDEPEAEPYDESVEAKE. A compositionally biased stretch (acidic residues) spans 314–326; it reads PDDEPEAEPYDES. Position 323 is a phosphotyrosine; by ZAP70 (Tyr323).

It belongs to the protein kinase superfamily. CMGC Ser/Thr protein kinase family. MAP kinase subfamily. Interacts with HDAC3 and DUSP16. It depends on Mg(2+) as a cofactor. Post-translationally, dually phosphorylated on Thr-180 and Tyr-182 by MAP2K3/MKK3, MAP2K4/MKK4 and MAP2K6/MKK6, which activates the enzyme.

It is found in the cytoplasm. It localises to the nucleus. The catalysed reaction is L-seryl-[protein] + ATP = O-phospho-L-seryl-[protein] + ADP + H(+). It carries out the reaction L-threonyl-[protein] + ATP = O-phospho-L-threonyl-[protein] + ADP + H(+). Its activity is regulated as follows. Activated by phosphorylation on threonine and tyrosine by MAP2K3/MKK3, MAP2K4/MKK4 and MAP2K6/MKK6. MAP2K3/MKK3 and MAP2K6/MKK6 are both essential for the activation of MAPK11 induced by environmental stress. HDAC3 interacts directly and selectively with MAPK11 to repress ATF2 transcriptional activity, and regulate TNF gene expression in LPS-stimulated cells. Inhibited by SB203580 and pyridinyl-imidazole related compounds. Its function is as follows. Serine/threonine kinase which acts as an essential component of the MAP kinase signal transduction pathway. MAPK11 is one of the four p38 MAPKs which play an important role in the cascades of cellular responses evoked by extracellular stimuli such as pro-inflammatory cytokines or physical stress leading to direct activation of transcription factors. Accordingly, p38 MAPKs phosphorylate a broad range of proteins and it has been estimated that they may have approximately 200 to 300 substrates each. MAPK11 functions are mostly redundant with those of MAPK14. Some of the targets are downstream kinases which are activated through phosphorylation and further phosphorylate additional targets. RPS6KA5/MSK1 and RPS6KA4/MSK2 can directly phosphorylate and activate transcription factors such as CREB1, ATF1, the NF-kappa-B isoform RELA/NFKB3, STAT1 and STAT3, but can also phosphorylate histone H3 and the nucleosomal protein HMGN1. RPS6KA5/MSK1 and RPS6KA4/MSK2 play important roles in the rapid induction of immediate-early genes in response to stress or mitogenic stimuli, either by inducing chromatin remodeling or by recruiting the transcription machinery. On the other hand, two other kinase targets, MAPKAPK2/MK2 and MAPKAPK3/MK3, participate in the control of gene expression mostly at the post-transcriptional level, by phosphorylating ZFP36 (tristetraprolin) and ELAVL1, and by regulating EEF2K, which is important for the elongation of mRNA during translation. MKNK1/MNK1 and MKNK2/MNK2, two other kinases activated by p38 MAPKs, regulate protein synthesis by phosphorylating the initiation factor EIF4E2. In the cytoplasm, the p38 MAPK pathway is an important regulator of protein turnover. For example, CFLAR is an inhibitor of TNF-induced apoptosis whose proteasome-mediated degradation is regulated by p38 MAPK phosphorylation. Ectodomain shedding of transmembrane proteins is regulated by p38 MAPKs as well. In response to inflammatory stimuli, p38 MAPKs phosphorylate the membrane-associated metalloprotease ADAM17. Such phosphorylation is required for ADAM17-mediated ectodomain shedding of TGF-alpha family ligands, which results in the activation of EGFR signaling and cell proliferation. Additional examples of p38 MAPK substrates are the FGFR1. FGFR1 can be translocated from the extracellular space into the cytosol and nucleus of target cells, and regulates processes such as rRNA synthesis and cell growth. FGFR1 translocation requires p38 MAPK activation. In the nucleus, many transcription factors are phosphorylated and activated by p38 MAPKs in response to different stimuli. Classical examples include ATF1, ATF2, ATF6, ELK1, PTPRH, DDIT3, TP53/p53 and MEF2C and MEF2A. The p38 MAPKs are emerging as important modulators of gene expression by regulating chromatin modifiers and remodelers. The promoters of several genes involved in the inflammatory response, such as IL6, IL8 and IL12B, display a p38 MAPK-dependent enrichment of histone H3 phosphorylation on 'Ser-10' (H3S10ph) in LPS-stimulated myeloid cells. This phosphorylation enhances the accessibility of the cryptic NF-kappa-B-binding sites marking promoters for increased NF-kappa-B recruitment. Phosphorylates methyltransferase DOT1L on 'Ser-834', 'Thr-900', 'Ser-902', 'Thr-984', 'Ser-1001', 'Ser-1009' and 'Ser-1104'. This is Mitogen-activated protein kinase 11 (Mapk11) from Mus musculus (Mouse).